Reading from the N-terminus, the 295-residue chain is Tyrosine recombinase XerD (295 aa).

Residues 1–85 (MDTIIEEYLK…TIRSFHQFAL (85 aa)) form the Core-binding (CB) domain. One can recognise a Tyr recombinase domain in the interval 106–289 (KLPDVLEINE…SKSQIRKMYN (184 aa)). Catalysis depends on residues Arg146, Lys170, His241, Arg244, and His267. Tyr276 serves as the catalytic O-(3'-phospho-DNA)-tyrosine intermediate.

The protein belongs to the 'phage' integrase family. XerD subfamily. Forms a cyclic heterotetrameric complex composed of two molecules of XerC and two molecules of XerD.

The protein localises to the cytoplasm. Functionally, site-specific tyrosine recombinase, which acts by catalyzing the cutting and rejoining of the recombining DNA molecules. The XerC-XerD complex is essential to convert dimers of the bacterial chromosome into monomers to permit their segregation at cell division. It also contributes to the segregational stability of plasmids. This Staphylococcus saprophyticus subsp. saprophyticus (strain ATCC 15305 / DSM 20229 / NCIMB 8711 / NCTC 7292 / S-41) protein is Tyrosine recombinase XerD.